Here is a 145-residue protein sequence, read N- to C-terminus: Large ribosomal subunit protein uL13 (145 aa).

Belongs to the universal ribosomal protein uL13 family. In terms of assembly, part of the 50S ribosomal subunit.

In terms of biological role, this protein is one of the early assembly proteins of the 50S ribosomal subunit, although it is not seen to bind rRNA by itself. It is important during the early stages of 50S assembly. This Listeria monocytogenes serotype 4b (strain CLIP80459) protein is Large ribosomal subunit protein uL13.